The chain runs to 237 residues: MLFAWITDPNAWLALGTLTLLEIVLGIDNIIFLSLVVAKLPTAQRAHARRLGLAGAMVMRLALLASIAWVTRLTNPLFTIFSQEISARDLILLLGGLFLIWKASKEIHESIEGEEEGLKTRVSSFLGAIVQIMLLDIIFSLDSVITAVGLSDHLFIMMAAVVIAVGVMMFAARSIGDFVERHPSVKMLALSFLILVGFTLILESFDIHVPKGYIYFAMFFSIAVESLNLIRNKKNPL.

Residues Met1–Thr17 are Periplasmic-facing. A helical transmembrane segment spans residues Leu18–Ala38. The Cytoplasmic segment spans residues Lys39–Arg50. The chain crosses the membrane as a helical span at residues Leu51 to Thr71. Over Arg72–Thr79 the chain is Periplasmic. A helical transmembrane segment spans residues Ile80–Ile100. Over Trp101–Ser124 the chain is Cytoplasmic. A helical membrane pass occupies residues Phe125–Ile145. Residues Thr146 to Ser151 are Periplasmic-facing. The helical transmembrane segment at Asp152–Ala172 threads the bilayer. At Arg173–Lys186 the chain is on the cytoplasmic side. A helical transmembrane segment spans residues Met187–Ile207. The Periplasmic portion of the chain corresponds to His208–Val209. The chain crosses the membrane as a helical span at residues Pro210–Ile230. Residues Arg231–Leu237 lie on the Cytoplasmic side of the membrane.

Belongs to the UPF0053 family.

It is found in the cell inner membrane. The protein is UPF0053 inner membrane protein YgdQ (ygdQ) of Escherichia coli O157:H7.